Here is a 217-residue protein sequence, read N- to C-terminus: Ranaspumin (217 aa).

Cystine bridges form between Cys18–Cys67, Cys38–Cys114, Cys125–Cys168, and Cys146–Cys207.

As to quaternary structure, monomer. In terms of tissue distribution, exclusively expressed in females in the early oviduct, the glandular part of the oviduct (pars convoluta dilata) and in the cloaca.

It is found in the secreted. In terms of biological role, acts as a surfactant. Is the major protein constituent (45%) of foam nests. Has no antimicrobial activity, no larvicidal activity, and is not toxic to mice. The polypeptide is Ranaspumin (Leptodactylus vastus (Northeastern pepper frog)).